The chain runs to 260 residues: Transcription repressor OFP13 (260 aa).

The 62-residue stretch at 150–211 (VAMESEDPYG…VSAFVDLLSG (62 aa)) folds into the OVATE domain.

As to expression, expressed in roots, rosette and cauline leaves, shoots, stems, flower buds and siliques.

Its subcellular location is the nucleus. In terms of biological role, transcriptional repressor that regulates multiple aspects of plant growth and development through the regulation of BEL1-LIKE (BLH) and KNOX TALE (KNAT) homeodomain transcription factors. This chain is Transcription repressor OFP13 (OFP13), found in Arabidopsis thaliana (Mouse-ear cress).